The sequence spans 521 residues: Bacillolysin (521 aa).

The first 27 residues, 1–27 (MGLGKKLSVAVAASFMSLTISLPGVQA), serve as a signal peptide directing secretion. A propeptide spans 28 to 221 (AENPQLKENL…ILKKQNKVEH (194 aa)) (activation peptide). 2 residues coordinate Ca(2+): Q283 and D360. Position 364 (H364) interacts with Zn(2+). The active site involves E365. Positions 368 and 388 each coordinate Zn(2+). Ca(2+) contacts are provided by D399, D402, D404, E407, and V411. The active-site Proton donor is the H449.

This sequence belongs to the peptidase M4 family. Requires Ca(2+) as cofactor. Zn(2+) is required as a cofactor.

The protein resides in the secreted. It catalyses the reaction Similar, but not identical, to that of thermolysin.. Functionally, extracellular zinc metalloprotease. This is Bacillolysin (npr) from Bacillus amyloliquefaciens (Bacillus velezensis).